A 409-amino-acid polypeptide reads, in one-letter code: Phenoxybenzoate dioxygenase subunit alpha (409 aa).

The region spanning 45-149 is the Rieske domain; sequence WQPVALSADV…VEERYGLVFA (105 aa). 4 residues coordinate [2Fe-2S] cluster: Cys85, His87, Cys104, and His107. Residues His210 and His215 each coordinate Fe cation.

The protein belongs to the bacterial ring-hydroxylating dioxygenase alpha subunit family. This dioxygenase system consists of two proteins: the alpha subunit (PobA) and a subunit (PobB) that acts as a ferredoxin and a ferredoxin reductase. [2Fe-2S] cluster serves as cofactor. It depends on Fe cation as a cofactor.

It participates in aromatic compound metabolism; carboxydiphenyl ether degradation. Degrades exclusively diarylether compounds having carboxyl groups in the 3- or 4-position. Yields a hemiacetal that spontaneously hydrolyzes to phenol and protocatechuate. In Ectopseudomonas oleovorans (Pseudomonas oleovorans), this protein is Phenoxybenzoate dioxygenase subunit alpha (pobA).